The sequence spans 278 residues: Putative phosphatase MG265 (278 aa).

Residue aspartate 9 is the Nucleophile of the active site. Residue aspartate 9 participates in Mg(2+) binding. Residue leucine 10 coordinates phosphate. Aspartate 11 serves as a coordination point for Mg(2+). Phosphate is bound by residues 43–44 (SG) and lysine 204. Aspartate 227 contributes to the Mg(2+) binding site. Position 230 (asparagine 230) interacts with phosphate.

Belongs to the HAD-like hydrolase superfamily. Cof family. Mg(2+) is required as a cofactor.

This is Putative phosphatase MG265 from Mycoplasma genitalium (strain ATCC 33530 / DSM 19775 / NCTC 10195 / G37) (Mycoplasmoides genitalium).